We begin with the raw amino-acid sequence, 78 residues long: Large ribosomal subunit protein bL28 (78 aa).

The protein belongs to the bacterial ribosomal protein bL28 family.

This chain is Large ribosomal subunit protein bL28, found in Prochlorococcus marinus (strain MIT 9211).